The chain runs to 313 residues: Ribosomal RNA small subunit methyltransferase H (313 aa).

S-adenosyl-L-methionine is bound by residues 35–37 (GGH), aspartate 55, phenylalanine 80, aspartate 102, and glutamine 109.

It belongs to the methyltransferase superfamily. RsmH family.

It is found in the cytoplasm. It catalyses the reaction cytidine(1402) in 16S rRNA + S-adenosyl-L-methionine = N(4)-methylcytidine(1402) in 16S rRNA + S-adenosyl-L-homocysteine + H(+). In terms of biological role, specifically methylates the N4 position of cytidine in position 1402 (C1402) of 16S rRNA. This chain is Ribosomal RNA small subunit methyltransferase H, found in Shewanella amazonensis (strain ATCC BAA-1098 / SB2B).